A 473-amino-acid chain; its full sequence is Arginine biosynthesis bifunctional protein ArgJ, mitochondrial (473 aa).

The substrate site is built by Thr201, Lys230, Thr241, Glu328, Asn468, and Thr473. Residue Thr241 is the Nucleophile of the active site.

The protein belongs to the ArgJ family. In terms of assembly, heterodimer of an alpha and a beta chain. Post-translationally, the alpha and beta chains are autoproteolytically processed from a single precursor protein within the mitochondrion.

It is found in the mitochondrion matrix. The catalysed reaction is N(2)-acetyl-L-ornithine + L-glutamate = N-acetyl-L-glutamate + L-ornithine. The enzyme catalyses L-glutamate + acetyl-CoA = N-acetyl-L-glutamate + CoA + H(+). It participates in amino-acid biosynthesis; L-arginine biosynthesis; L-ornithine and N-acetyl-L-glutamate from L-glutamate and N(2)-acetyl-L-ornithine (cyclic): step 1/1. It functions in the pathway amino-acid biosynthesis; L-arginine biosynthesis; N(2)-acetyl-L-ornithine from L-glutamate: step 1/4. In terms of biological role, catalyzes two activities which are involved in the cyclic version of arginine biosynthesis: the synthesis of acetylglutamate from glutamate and acetyl-CoA, and of ornithine by transacetylation between acetylornithine and glutamate. This is Arginine biosynthesis bifunctional protein ArgJ, mitochondrial from Blastomyces gilchristii (strain SLH14081) (Blastomyces dermatitidis).